Consider the following 961-residue polypeptide: Cytochrome b5-like reductase apf12 (961 aa).

Ala-298 lines the FAD pocket. Positions 429 to 548 (ARPQVDAFAW…IKPAPHFRIA (120 aa)) constitute an FAD-binding FR-type domain. Residues 453–456 (SRIQ), 499–500 (SK), and Gly-753 each bind NADP(+). The Cytochrome b5 heme-binding domain occupies 716–793 (LNQITKLELA…LNEMVIGRLD (78 aa)). Residue 753–755 (GGE) participates in FAD binding.

This sequence belongs to the flavoprotein pyridine nucleotide cytochrome reductase family. FAD serves as cofactor.

Its pathway is secondary metabolite biosynthesis. Functionally, cytochrome b5-like reductase; part of the gene cluster that mediates the biosynthesis of the cyclic tetrapeptide apicidin F (APF). The non-ribosomal peptide synthetase apf1 incorporates four different amino acids to produce apicidin F: L-phenylalanine, D-pipecolic acid (D-pip), N-methoxy-L-tryptophan and L-2-aminooctanedioic acid. L-Phenylalanine is the only proteinogenic amino acid directly used by apf1. The 3 other apf1 substrates are non-proteinogenic and have to be modified by other enzymes of the cluster. Lysine is converted to delta-1-pyrroline-5-carboxylate (P5C) which is reduced to L-pipecolic acid (L-pip) by apf3. L-pip is epimerized to D-pip, probably by apf1 activity, prior to incorporation. L-Tryptophan is N-oxidyzed by one of the cytochrome P450 monooxygenases (apf7 or apf8), and further methylated at the hydroxy group by the O-methyltransferase apf6 to yield N-methoxy-L-tryptophan. The synthesis of the fourth apf1 substrate is more complex. The fatty acid synthase apf5 is involved in the synthesis of the octanoic acid backbone of L-2-aminooctanedioic acid by fixing one acetyl-CoA unit and three malonyl-CoA units. Then one of the cytochrome P450 monooxygenases (apf7 or apf8) may oxidize this backbone to 2-oxooctanoic acid. The aminotransferase apf4 is predicted to catalyze the exchange of the keto group with an amino group. The next step would be the oxidation of 2-aminooctanoic acid by one of the cytochrome P450 monooxygenases (apf7 or apf8). The last step is the oxidation of 2-amino-8-hydroxyoctanoic acid to 2-aminooctanedioic acid is catalyzed by the FAD-dependent monooxygenase apf9. This is Cytochrome b5-like reductase apf12 from Gibberella fujikuroi (strain CBS 195.34 / IMI 58289 / NRRL A-6831) (Bakanae and foot rot disease fungus).